The following is a 984-amino-acid chain: Zinc finger and BTB domain-containing protein 4 (984 aa).

The BTB domain occupies 30–131 (CDVTLIAGDT…IYSARLALPG (102 aa)). A Glycyl lysine isopeptide (Lys-Gly) (interchain with G-Cter in SUMO2) cross-link involves residue lysine 40. Disordered regions lie at residues 71 to 104 (TGGS…PPRV), 172 to 210 (MVTS…RRPF), and 227 to 262 (THEA…ASAL). The segment covering 74-88 (SAPSPATTTAASSSS) has biased composition (low complexity). Positions 165-324 (VPPAPSSMVT…CRYCEKVFAL (160 aa)) are interaction with CBFA2T3. The segment at 210–232 (FPCPRCGKSFIHPKRLQTHEAQC) adopts a C2H2-type 1; atypical zinc-finger fold. Residues 242-255 (AGLGPGGSGPGGPA) show a composition bias toward gly residues. 3 C2H2-type zinc fingers span residues 285–307 (YVCA…SNVH), 313–335 (YPCR…EVWH), and 341–364 (YQCI…RAFH). Serine 367 carries the phosphoserine modification. The disordered stretch occupies residues 461–575 (GSSSSGAAGG…GSSQLQAPPP (115 aa)). Over residues 467–477 (AAGGGPVGTGG) the composition is skewed to gly residues. Composition is skewed to low complexity over residues 478–488 (SQAASVITYTT) and 507–529 (ATPT…ATAT). Lysine 548 is covalently cross-linked (Glycyl lysine isopeptide (Lys-Gly) (interchain with G-Cter in SUMO2)). Residues 552-565 (GVSGSGGSPTGTGR) show a composition bias toward gly residues. Residue lysine 590 forms a Glycyl lysine isopeptide (Lys-Gly) (interchain with G-Cter in SUMO2) linkage. Disordered stretches follow at residues 593–696 (ISET…GERR), 713–734 (RKHQ…RSST), 756–836 (QRHA…VAGG), 853–876 (GGSR…ASEG), and 947–984 (QTAP…GDVG). Over residues 604–627 (SGEEVEESEEEEEEEEEEDQEDQE) the composition is skewed to acidic residues. The span at 628 to 637 (ESKAGGEDQL) shows a compositional bias: basic and acidic residues. 2 C2H2-type zinc fingers span residues 697–719 (HRCG…QEAH) and 736–758 (FTCP…GQRH). 2 positions are modified to phosphothreonine; by HIPK2: threonine 766 and threonine 768. Over residues 807 to 819 (AAAAAAEASESAS) the composition is skewed to low complexity. The segment covering 948 to 966 (TAPPTPPTPPPPLPLPVPP) has biased composition (pro residues). Position 955 is a phosphothreonine; by HIPK2 (threonine 955).

As to quaternary structure, interacts with HIPK2. Interacts with CBFA2T3. Interacts with ZBTB38. Post-translationally, phosphorylated by HIPK2. This phosphorylation reduces stability and triggers ZBTB4 protein degradation in response to DNA damage.

Its subcellular location is the nucleus. It localises to the chromosome. Its function is as follows. Transcriptional repressor with bimodal DNA-binding specificity. Represses transcription in a methyl-CpG-dependent manner. Binds with a higher affinity to methylated CpG dinucleotides in the consensus sequence 5'-CGCG-3' but can also bind to the non-methylated consensus sequence 5'-CTGCNA-3' also known as the consensus kaiso binding site (KBS). Can also bind specifically to a single methyl-CpG pair and can bind hemimethylated DNA but with a lower affinity compared to methylated DNA. Plays a role in postnatal myogenesis, may be involved in the regulation of satellite cells self-renewal. This Rattus norvegicus (Rat) protein is Zinc finger and BTB domain-containing protein 4 (Zbtb4).